Consider the following 341-residue polypeptide: Anthranilate phosphoribosyltransferase (341 aa).

Residues Gly-79, 82–83 (GD), Thr-87, 89–92 (NIST), 107–115 (KHGGRSVSS), and Ser-119 each bind 5-phospho-alpha-D-ribose 1-diphosphate. Anthranilate is bound at residue Gly-79. Residue Ser-91 coordinates Mg(2+). Arg-165 is a binding site for anthranilate. Residues Asp-224 and Glu-225 each coordinate Mg(2+).

Belongs to the anthranilate phosphoribosyltransferase family. Homodimer. Mg(2+) serves as cofactor.

It catalyses the reaction N-(5-phospho-beta-D-ribosyl)anthranilate + diphosphate = 5-phospho-alpha-D-ribose 1-diphosphate + anthranilate. Its pathway is amino-acid biosynthesis; L-tryptophan biosynthesis; L-tryptophan from chorismate: step 2/5. In terms of biological role, catalyzes the transfer of the phosphoribosyl group of 5-phosphorylribose-1-pyrophosphate (PRPP) to anthranilate to yield N-(5'-phosphoribosyl)-anthranilate (PRA). The chain is Anthranilate phosphoribosyltransferase from Ruminiclostridium cellulolyticum (strain ATCC 35319 / DSM 5812 / JCM 6584 / H10) (Clostridium cellulolyticum).